We begin with the raw amino-acid sequence, 156 residues long: Small ribosomal subunit protein uS7 (156 aa).

It belongs to the universal ribosomal protein uS7 family. In terms of assembly, part of the 30S ribosomal subunit. Contacts proteins S9 and S11.

Its function is as follows. One of the primary rRNA binding proteins, it binds directly to 16S rRNA where it nucleates assembly of the head domain of the 30S subunit. Is located at the subunit interface close to the decoding center, probably blocks exit of the E-site tRNA. The polypeptide is Small ribosomal subunit protein uS7 (Staphylococcus carnosus (strain TM300)).